Consider the following 62-residue polypeptide: Photosystem II reaction center protein Z (62 aa).

A run of 2 helical transmembrane segments spans residues 8-28 and 41-61; these read TVLALIATSFLMVIGVPVIFA and FSGALLWISLVFAVGILNSFV.

Belongs to the PsbZ family. As to quaternary structure, PSII is composed of 1 copy each of membrane proteins PsbA, PsbB, PsbC, PsbD, PsbE, PsbF, PsbH, PsbI, PsbJ, PsbK, PsbL, PsbM, PsbT, PsbY, PsbZ, Psb30/Ycf12, at least 3 peripheral proteins of the oxygen-evolving complex and a large number of cofactors. It forms dimeric complexes.

The protein localises to the plastid. The protein resides in the chloroplast thylakoid membrane. In terms of biological role, may control the interaction of photosystem II (PSII) cores with the light-harvesting antenna, regulates electron flow through the 2 photosystem reaction centers. PSII is a light-driven water plastoquinone oxidoreductase, using light energy to abstract electrons from H(2)O, generating a proton gradient subsequently used for ATP formation. The polypeptide is Photosystem II reaction center protein Z (Mesostigma viride (Green alga)).